A 571-amino-acid chain; its full sequence is Protein tesmin/TSO1-like CXC 6 (571 aa).

5 disordered regions span residues 1–52, 92–119, 293–325, 370–411, and 507–571; these read MGEG…AAAS, IRHPRPESPNSMPRPAGETRDGTPQKKK, NQGTKDSSTHRLGQANNGRTTSSQTGSRAGGNA, LANQ…RSLS, and NGVS…KKDL. Residues 7–16 are compositionally biased toward basic and acidic residues; the sequence is GDKFPPKTDE. The CRC domain occupies 117–241; it reads KKKQCNCKHS…KCLDCKNFEG (125 aa). Composition is skewed to polar residues over residues 293–319, 373–388, and 508–539; these read NQGTKDSSTHRLGQANNGRTTSSQTGS, QKETSVASSVQDQGHV, and GVSQTAKQPSQLNTTTPNTSSQTANGVSQTAK. Over residues 540–557 the composition is skewed to low complexity; the sequence is QPSQLTTTTTTPNTSSQT.

The protein belongs to the lin-54 family. In terms of tissue distribution, ubiquitous but expressed mostly in flowers.

The protein localises to the nucleus. Plays a role in development of both male and female reproductive tissues. The sequence is that of Protein tesmin/TSO1-like CXC 6 (TCX6) from Arabidopsis thaliana (Mouse-ear cress).